Here is a 361-residue protein sequence, read N- to C-terminus: Tryptophan--tRNA ligase, mitochondrial (361 aa).

The N-terminal 16 residues, 1 to 16, are a transit peptide targeting the mitochondrion; sequence MAKLPKITSLLPHSRV. Residues Gln-21 and 27 to 30 contribute to the ATP site; that span reads HIGN. A 'HIGH' region motif is present at residues 22–30; the sequence is PTGIPHIGN. Asp-165 serves as a coordination point for L-tryptophan. Residues 177–179, 225–229, and Lys-228 contribute to the ATP site; these read GKD and KMSKS. The short motif at 225–229 is the 'KMSKS' region element; sequence KMSKS.

It belongs to the class-I aminoacyl-tRNA synthetase family. Homodimer.

The protein resides in the mitochondrion matrix. The catalysed reaction is tRNA(Trp) + L-tryptophan + ATP = L-tryptophyl-tRNA(Trp) + AMP + diphosphate + H(+). The protein is Tryptophan--tRNA ligase, mitochondrial of Schizosaccharomyces pombe (strain 972 / ATCC 24843) (Fission yeast).